Here is a 577-residue protein sequence, read N- to C-terminus: Zinc finger-containing ubiquitin peptidase 1 (577 aa).

Residues 2 to 24 form a C2H2-type 1 zinc finger; that stretch reads LSCDICGETVTSEPDRKAHLIVH. The C2H2-type 2; atypical zinc-finger motif lies at 29–52; the sequence is IICPFCKLSGINYNEMCFHIETAH. 2 C2H2-type zinc fingers span residues 153-176 and 192-214; these read PECP…KTKH and YDCP…VDLH. Positions 225 to 247 are MIU; it reads DRVQCSSDRELAHQLQQEEERKR. Basic and acidic residues predominate over residues 231-261; that stretch reads SDRELAHQLQQEEERKRKSEESRQEREEFQK. Residues 231-262 are disordered; that stretch reads SDRELAHQLQQEEERKRKSEESRQEREEFQKL. The interval 248–273 is zUBD/ZHA; sequence KSEESRQEREEFQKLQRQYGLDNSGG. Position 261 is an N6-acetyllysine (Lys-261). Catalysis depends on Cys-359, which acts as the Nucleophile. The Proton acceptor role is filled by His-490. Residue Asp-511 is part of the active site.

This sequence belongs to the peptidase C78 family. ZUFSP subfamily. Interacts with RPA1 and RPA2.

The protein resides in the cytoplasm. It is found in the nucleus. It carries out the reaction Thiol-dependent hydrolysis of ester, thioester, amide, peptide and isopeptide bonds formed by the C-terminal Gly of ubiquitin (a 76-residue protein attached to proteins as an intracellular targeting signal).. Its function is as follows. Deubiquitinase with endodeubiquitinase activity that specifically interacts with and cleaves 'Lys-63'-linked long polyubiquitin chains. Shows only weak activity against 'Lys-11' and 'Lys-48'-linked chains. Plays an important role in genome stability pathways, functioning to prevent spontaneous DNA damage and also promote cellular survival in response to exogenous DNA damage. Modulates the ubiquitination status of replication protein A (RPA) complex proteins in response to replication stress. In Rattus norvegicus (Rat), this protein is Zinc finger-containing ubiquitin peptidase 1.